Consider the following 88-residue polypeptide: uncharacterized protein (88 aa).

To E.coli YihD.

This is an uncharacterized protein from Haemophilus influenzae (strain ATCC 51907 / DSM 11121 / KW20 / Rd).